A 169-amino-acid chain; its full sequence is Myosin regulatory light chain 11 (169 aa).

A N,N,N-trimethylalanine modification is found at alanine 2. Serine 15 and serine 16 each carry phosphoserine. Phosphothreonine is present on residues threonine 25 and threonine 35. The 36-residue stretch at 25–60 folds into the EF-hand 1 domain; it reads TQIQEFKEAFTVIDQNRDGIIDKEDLRDTFAAMGRL. Residues aspartate 38, asparagine 40, aspartate 42, and aspartate 49 each contribute to the Ca(2+) site. A Phosphoserine modification is found at serine 75. 2 consecutive EF-hand domains span residues 95-130 and 131-166; these read DPEDVITGAFKVLDPEGKGTIKKQFLEELLTTQCDR and FSQEEIKNMWAAFPPDVGGNVDYKNICYVITHGDAK. At threonine 101 the chain carries Phosphothreonine.

Myosin is a hexamer of 2 heavy chains and 4 light chains.

Its function is as follows. Myosin regulatory subunit that plays an essential role to maintain muscle integrity during early development. Plays a role in regulation of muscle contraction. The sequence is that of Myosin regulatory light chain 11 (Myl11) from Mus musculus (Mouse).